The primary structure comprises 358 residues: Glyoxylate/succinic semialdehyde reductase 2, chloroplastic (358 aa).

A chloroplast-targeting transit peptide spans 1–44; it reads MPLVSLSFASSSSKAMALCSICPRIPLRFRPKPISPFLSKPQIC. NADP(+) contacts are provided by residues 70 to 84 and Thr161; that span reads GFLGMGIMGSPMAQN. Lys236 is a catalytic residue. Position 304 (Lys304) interacts with NADP(+).

Belongs to the HIBADH-related family. NP60 subfamily.

It localises to the plastid. Its subcellular location is the chloroplast stroma. The enzyme catalyses glycolate + NADP(+) = glyoxylate + NADPH + H(+). It carries out the reaction 4-hydroxybutanoate + NADP(+) = succinate semialdehyde + NADPH + H(+). With respect to regulation, the ratio of NADPH/NADP(+) may regulate enzymatic activity. Functionally, catalyzes the NADPH-dependent reduction of glyoxylate to glycolate as well as succinic semialdehyde (SSA) to gamma-hydroxybutyrate in vitro. May function in redox homeostasis and play a role in oxidative stress tolerance by detoxifying glyoxylate and SSA generated in glycolate metabolism and GABA metabolism, respectively. The protein is Glyoxylate/succinic semialdehyde reductase 2, chloroplastic (GLYR2) of Arabidopsis thaliana (Mouse-ear cress).